Consider the following 203-residue polypeptide: dITP/XTP pyrophosphatase (203 aa).

8–13 (TANKGK) contacts substrate. Residues Glu41 and Asp70 each coordinate Mg(2+). Residue Asp70 is the Proton acceptor of the active site. Residues Ser71, 153–156 (FGYD), Lys176, and 181–182 (HR) each bind substrate.

This sequence belongs to the HAM1 NTPase family. As to quaternary structure, homodimer. Requires Mg(2+) as cofactor.

The catalysed reaction is XTP + H2O = XMP + diphosphate + H(+). It carries out the reaction dITP + H2O = dIMP + diphosphate + H(+). The enzyme catalyses ITP + H2O = IMP + diphosphate + H(+). Pyrophosphatase that catalyzes the hydrolysis of nucleoside triphosphates to their monophosphate derivatives, with a high preference for the non-canonical purine nucleotides XTP (xanthosine triphosphate), dITP (deoxyinosine triphosphate) and ITP. Seems to function as a house-cleaning enzyme that removes non-canonical purine nucleotides from the nucleotide pool, thus preventing their incorporation into DNA/RNA and avoiding chromosomal lesions. In Listeria monocytogenes serotype 4b (strain F2365), this protein is dITP/XTP pyrophosphatase.